Reading from the N-terminus, the 87-residue chain is Small ribosomal subunit protein bS20 (87 aa).

The segment at 1-20 (MANHKSAEKRARQTIKRTER) is disordered.

Belongs to the bacterial ribosomal protein bS20 family.

In terms of biological role, binds directly to 16S ribosomal RNA. The protein is Small ribosomal subunit protein bS20 of Campylobacter lari (strain RM2100 / D67 / ATCC BAA-1060).